The primary structure comprises 198 residues: Phomoidride biosynthesis cluster protein N (198 aa).

Positions 1–18 are cleaved as a signal peptide; sequence MILFSIFVALLAATRAQS. N-linked (GlcNAc...) asparagine glycosylation occurs at Asn-93.

This sequence belongs to the tstN family.

Phosphatidylethanolamine-binding protein; part of the gene cluster that mediates the biosynthesis of the antihypercholesterolemic agents phomoidrides which are dimeric anhydrides. Within the pathway, tstNB is not essential for dimerization and its function has still to be determined. The pathway begins with the highly reducing polyketide synthase tstA that catalyzes the formation of a C12-fatty acyl-ACP, starting from one acetate and 5 malonate units. The hydrolase tstM is involved in the release of the C12-fatty acyl chain from phiA. The alkylcitrate synthase (ACS) tstJ and the alkylcitrate dehydratase (ACDH) tstI then give rise to decarboxylated monomeric anhydrides by coupling the C12-fatty acyl chain with oxalacetic acid. The cyclase tstC is responsible for the dimerization of the monomeric anhydrides which leads to the production of prephomoidride that contains the characteristic bicyclo[4.3.1]deca-1,6-diene system of phomoidrides. Iterative oxidation catalyzed by the alpha-ketoglutarate-dependent dioxygenase tstK produced then phomoidride A. Finally, the methyltransferase tstE converts phomoidride A to phomoidride B via an acetalization reaction. The phosphatidylethanolamine-binding protein tstB and tstN are not essential for dimerization and their functions have still to be determined. The polypeptide is Phomoidride biosynthesis cluster protein N (Talaromyces stipitatus (strain ATCC 10500 / CBS 375.48 / QM 6759 / NRRL 1006) (Penicillium stipitatum)).